We begin with the raw amino-acid sequence, 637 residues long: Biosynthetic arginine decarboxylase (637 aa).

An N6-(pyridoxal phosphate)lysine modification is found at Lys101. A substrate-binding site is contributed by 286–296 (FDVGGGLAVDY).

The protein belongs to the Orn/Lys/Arg decarboxylase class-II family. SpeA subfamily. Mg(2+) serves as cofactor. The cofactor is pyridoxal 5'-phosphate.

The enzyme catalyses L-arginine + H(+) = agmatine + CO2. Its pathway is amine and polyamine biosynthesis; agmatine biosynthesis; agmatine from L-arginine: step 1/1. Catalyzes the biosynthesis of agmatine from arginine. The sequence is that of Biosynthetic arginine decarboxylase from Shewanella sediminis (strain HAW-EB3).